We begin with the raw amino-acid sequence, 321 residues long: tRNA uridine(34) hydroxylase (321 aa).

A Rhodanese domain is found at 135-233; the sequence is DDPLTLVIDT…YLEEVPENES (99 aa). The Cysteine persulfide intermediate role is filled by C193.

Belongs to the TrhO family.

The catalysed reaction is uridine(34) in tRNA + AH2 + O2 = 5-hydroxyuridine(34) in tRNA + A + H2O. Its function is as follows. Catalyzes oxygen-dependent 5-hydroxyuridine (ho5U) modification at position 34 in tRNAs. This is tRNA uridine(34) hydroxylase from Prochlorococcus marinus (strain SARG / CCMP1375 / SS120).